We begin with the raw amino-acid sequence, 335 residues long: Adenine deaminase (335 aa).

Zn(2+) is bound by residues histidine 17, histidine 19, and histidine 197. Glutamate 200 acts as the Proton donor in catalysis. Aspartate 278 contributes to the Zn(2+) binding site. Aspartate 279 lines the substrate pocket.

Belongs to the metallo-dependent hydrolases superfamily. Adenosine and AMP deaminases family. Adenine deaminase type 2 subfamily. The cofactor is Zn(2+).

The enzyme catalyses adenine + H2O + H(+) = hypoxanthine + NH4(+). Catalyzes the hydrolytic deamination of adenine to hypoxanthine. Plays an important role in the purine salvage pathway and in nitrogen catabolism. The protein is Adenine deaminase of Marinomonas sp. (strain MWYL1).